A 252-amino-acid chain; its full sequence is Adenylate kinase (252 aa).

Gly47–Thr52 contacts ATP. An NMP region spans residues Ala67–Val96. AMP is bound by residues Thr68, Arg73, Gly94–Val96, Gly123–Arg126, and Gln130. An LID region spans residues Gly164 to Asp201. ATP contacts are provided by residues Arg165 and Ser174–Tyr175. Arg198 and Arg209 together coordinate AMP. Gln237 contributes to the ATP binding site.

This sequence belongs to the adenylate kinase family. AK2 subfamily. In terms of assembly, monomer.

It is found in the cytoplasm. The protein localises to the cytosol. It localises to the mitochondrion intermembrane space. The enzyme catalyses AMP + ATP = 2 ADP. In terms of biological role, catalyzes the reversible transfer of the terminal phosphate group between ATP and AMP. Plays an important role in cellular energy homeostasis and in adenine nucleotide metabolism. Adenylate kinase activity is critical for regulation of the phosphate utilization and the AMP de novo biosynthesis pathways. The polypeptide is Adenylate kinase (Lodderomyces elongisporus (strain ATCC 11503 / CBS 2605 / JCM 1781 / NBRC 1676 / NRRL YB-4239) (Yeast)).